The chain runs to 90 residues: Large ribosomal subunit protein bL31B (90 aa).

This sequence belongs to the bacterial ribosomal protein bL31 family. Type B subfamily. Part of the 50S ribosomal subunit.

In Pseudomonas fluorescens (strain SBW25), this protein is Large ribosomal subunit protein bL31B.